The sequence spans 468 residues: Maltose fermentation regulatory protein MAL33 (468 aa).

The zn(2)-C6 fungal-type DNA-binding region spans 8-34 (CDYCRVRRVKCDGKKPCSRCIEHNFDC). The short motif at 41–49 (KKRGSKPIG) is the Nuclear localization signal element.

This sequence belongs to the MAL13 family.

It is found in the nucleus. Functionally, regulates the coordinate transcription of structural MAL3S (maltase) and MAL3T (maltose permease) genes. This chain is Maltose fermentation regulatory protein MAL33 (MAL33), found in Saccharomyces cerevisiae (strain ATCC 204508 / S288c) (Baker's yeast).